We begin with the raw amino-acid sequence, 612 residues long: Sulfite reductase [NADPH] hemoprotein beta-component (612 aa).

The segment at 1 to 26 is disordered; it reads MDDHKPIETPDGPAVDTPGIGARRYE. [4Fe-4S] cluster is bound by residues cysteine 469, cysteine 475, cysteine 514, and cysteine 518. Residue cysteine 518 coordinates siroheme.

The protein belongs to the nitrite and sulfite reductase 4Fe-4S domain family. In terms of assembly, alpha(8)-beta(8). The alpha component is a flavoprotein, the beta component is a hemoprotein. Requires siroheme as cofactor. The cofactor is [4Fe-4S] cluster.

It catalyses the reaction hydrogen sulfide + 3 NADP(+) + 3 H2O = sulfite + 3 NADPH + 4 H(+). It participates in sulfur metabolism; hydrogen sulfide biosynthesis; hydrogen sulfide from sulfite (NADPH route): step 1/1. In terms of biological role, component of the sulfite reductase complex that catalyzes the 6-electron reduction of sulfite to sulfide. This is one of several activities required for the biosynthesis of L-cysteine from sulfate. The chain is Sulfite reductase [NADPH] hemoprotein beta-component from Methylorubrum extorquens (strain CM4 / NCIMB 13688) (Methylobacterium extorquens).